The sequence spans 375 residues: DNA replication and repair protein RecF (375 aa).

30-37 (GNNGSGKS) contacts ATP.

This sequence belongs to the RecF family.

Its subcellular location is the cytoplasm. Functionally, the RecF protein is involved in DNA metabolism; it is required for DNA replication and normal SOS inducibility. RecF binds preferentially to single-stranded, linear DNA. It also seems to bind ATP. In Hahella chejuensis (strain KCTC 2396), this protein is DNA replication and repair protein RecF.